Consider the following 427-residue polypeptide: Pectin acetylesterase 5 (427 aa).

A signal peptide spans 1–35 (MAIPRFSSLLRCRKWAKSDWLVASIGCVLIVFFLS). The N-linked (GlcNAc...) asparagine glycan is linked to N173. Active-site charge relay system residues include S209, D305, and H372. An N-linked (GlcNAc...) asparagine glycan is attached at N391.

The protein belongs to the pectinacetylesterase family.

It localises to the secreted. Its subcellular location is the cell wall. Its function is as follows. Hydrolyzes acetyl esters in homogalacturonan regions of pectin. In type I primary cell wall, galacturonic acid residues of pectin can be acetylated at the O-2 and O-3 positions. Decreasing the degree of acetylation of pectin gels in vitro alters their physical properties. The sequence is that of Pectin acetylesterase 5 from Arabidopsis thaliana (Mouse-ear cress).